We begin with the raw amino-acid sequence, 378 residues long: Queuine tRNA-ribosyltransferase (378 aa).

Aspartate 90 acts as the Proton acceptor in catalysis. Substrate-binding positions include 90–94 (DSGGF), aspartate 144, glutamine 188, and glycine 220. The RNA binding stretch occupies residues 251-257 (GVGTPED). Aspartate 270 acts as the Nucleophile in catalysis. The interval 275 to 279 (TRNAR) is RNA binding; important for wobble base 34 recognition. Residues cysteine 308, cysteine 310, cysteine 313, and histidine 339 each coordinate Zn(2+).

This sequence belongs to the queuine tRNA-ribosyltransferase family. Homodimer. Within each dimer, one monomer is responsible for RNA recognition and catalysis, while the other monomer binds to the replacement base PreQ1. Zn(2+) is required as a cofactor.

It carries out the reaction 7-aminomethyl-7-carbaguanine + guanosine(34) in tRNA = 7-aminomethyl-7-carbaguanosine(34) in tRNA + guanine. It participates in tRNA modification; tRNA-queuosine biosynthesis. Catalyzes the base-exchange of a guanine (G) residue with the queuine precursor 7-aminomethyl-7-deazaguanine (PreQ1) at position 34 (anticodon wobble position) in tRNAs with GU(N) anticodons (tRNA-Asp, -Asn, -His and -Tyr). Catalysis occurs through a double-displacement mechanism. The nucleophile active site attacks the C1' of nucleotide 34 to detach the guanine base from the RNA, forming a covalent enzyme-RNA intermediate. The proton acceptor active site deprotonates the incoming PreQ1, allowing a nucleophilic attack on the C1' of the ribose to form the product. After dissociation, two additional enzymatic reactions on the tRNA convert PreQ1 to queuine (Q), resulting in the hypermodified nucleoside queuosine (7-(((4,5-cis-dihydroxy-2-cyclopenten-1-yl)amino)methyl)-7-deazaguanosine). The protein is Queuine tRNA-ribosyltransferase of Nautilia profundicola (strain ATCC BAA-1463 / DSM 18972 / AmH).